Consider the following 562-residue polypeptide: Cytosolic invertase 1 (562 aa).

Belongs to the glycosyl hydrolase 100 family.

It is found in the cytoplasm. It localises to the cytosol. It catalyses the reaction Hydrolysis of terminal non-reducing beta-D-fructofuranoside residues in beta-D-fructofuranosides.. Its function is as follows. Cytosolic invertase that cleaves sucrose into glucose and fructose and is involved in the regulation of primary root elongation, lateral root formation, floral transition and pollen development. The sequence is that of Cytosolic invertase 1 from Oryza sativa subsp. japonica (Rice).